We begin with the raw amino-acid sequence, 227 residues long: H-N-H endonuclease F-TflIV (227 aa).

Functionally, endonuclease that introduces double-strand break into pseudo palindromic 17 bp DNA sequence yielding 1 bp extensions with 3'-overhangs. In Escherichia phage T5 (Enterobacteria phage T5), this protein is H-N-H endonuclease F-TflIV.